Here is a 349-residue protein sequence, read N- to C-terminus: Isopentenyl-diphosphate delta-isomerase (349 aa).

7-8 (RK) lines the substrate pocket. FMN contacts are provided by residues serine 65, 66–68 (SMT), serine 96, and asparagine 124. 96–98 (SQR) contacts substrate. Glutamine 159 is a substrate binding site. Residue glutamate 160 participates in Mg(2+) binding. FMN-binding positions include lysine 191, threonine 221, 271–273 (GIR), and 292–293 (AA).

This sequence belongs to the IPP isomerase type 2 family. Homooctamer. Dimer of tetramers. FMN serves as cofactor. Requires NADPH as cofactor. It depends on Mg(2+) as a cofactor.

The protein resides in the cytoplasm. It carries out the reaction isopentenyl diphosphate = dimethylallyl diphosphate. Functionally, involved in the biosynthesis of isoprenoids. Catalyzes the 1,3-allylic rearrangement of the homoallylic substrate isopentenyl (IPP) to its allylic isomer, dimethylallyl diphosphate (DMAPP). The chain is Isopentenyl-diphosphate delta-isomerase from Synechocystis sp. (strain ATCC 27184 / PCC 6803 / Kazusa).